A 311-amino-acid polypeptide reads, in one-letter code: CID domain-containing protein 1 (311 aa).

The region spanning 1–134 (MSDFTEQTLR…RLQEAHQQMK (134 aa)) is the CID domain. The stretch at 224–256 (MLEDYVKRLKEETKERESLETNLNMLIQNVRMS) forms a coiled coil.

The protein is CID domain-containing protein 1 (cids-1) of Caenorhabditis briggsae.